Consider the following 377-residue polypeptide: dTDP-fucopyranose mutase (377 aa).

FAD-binding positions include S12, 31–32 (DD), N39, 58–59 (HI), R348, and 355–360 (LDMDVC).

Belongs to the UDP-galactopyranose/dTDP-fucopyranose mutase family. The cofactor is FAD.

It catalyses the reaction dTDP-alpha-D-fucose = dTDP-alpha-D-fucofuranose. It functions in the pathway bacterial outer membrane biogenesis; LPS O-antigen biosynthesis. With respect to regulation, inhibited by Cu(2+), while other divalent cations such as Ca(2+), Co(2+), Fe(2+) and Mg(2+) have no obvious effects on enzyme activity. Functionally, catalyzes the conversion of dTDP-alpha-D-fucopyranose to dTDP-alpha-D-fucofuranose. This is a step in the biosynthesis of D-fucofuranose, a component of E.coli O52 O antigen. This chain is dTDP-fucopyranose mutase (fcf2), found in Escherichia coli.